Reading from the N-terminus, the 349-residue chain is 4-hydroxy-3-methylbut-2-en-1-yl diphosphate synthase (flavodoxin) (349 aa).

Residues Cys-264, Cys-267, Cys-299, and Glu-306 each contribute to the [4Fe-4S] cluster site.

The protein belongs to the IspG family. [4Fe-4S] cluster serves as cofactor.

The catalysed reaction is (2E)-4-hydroxy-3-methylbut-2-enyl diphosphate + oxidized [flavodoxin] + H2O + 2 H(+) = 2-C-methyl-D-erythritol 2,4-cyclic diphosphate + reduced [flavodoxin]. It functions in the pathway isoprenoid biosynthesis; isopentenyl diphosphate biosynthesis via DXP pathway; isopentenyl diphosphate from 1-deoxy-D-xylulose 5-phosphate: step 5/6. Its function is as follows. Converts 2C-methyl-D-erythritol 2,4-cyclodiphosphate (ME-2,4cPP) into 1-hydroxy-2-methyl-2-(E)-butenyl 4-diphosphate. In Clostridium tetani (strain Massachusetts / E88), this protein is 4-hydroxy-3-methylbut-2-en-1-yl diphosphate synthase (flavodoxin).